The sequence spans 184 residues: Probable cobalt-precorrin-6B C(15)-methyltransferase (decarboxylating) (184 aa).

S-adenosyl-L-methionine-binding positions include threonine 12, 36–40 (GCGTG), aspartate 59, and alanine 87.

It belongs to the methyltransferase superfamily. Archaeal-type CbiT family.

The enzyme catalyses Co-precorrin-6B + S-adenosyl-L-methionine = Co-precorrin-7 + S-adenosyl-L-homocysteine + CO2. It participates in cofactor biosynthesis; adenosylcobalamin biosynthesis; cob(II)yrinate a,c-diamide from sirohydrochlorin (anaerobic route): step 8/10. In terms of biological role, catalyzes the methylation of C-15 in cobalt-precorrin-6B followed by the decarboxylation of C-12 to form cobalt-precorrin-7. The protein is Probable cobalt-precorrin-6B C(15)-methyltransferase (decarboxylating) of Methanosarcina acetivorans (strain ATCC 35395 / DSM 2834 / JCM 12185 / C2A).